A 501-amino-acid polypeptide reads, in one-letter code: Cytochrome P450 monooxygenase ccsG (501 aa).

The signal sequence occupies residues 1–28 (MMITLFTLAVVSIGFFLWWLLTVQPAVT). 2 N-linked (GlcNAc...) asparagine glycosylation sites follow: N115 and N154. Position 443 (C443) interacts with heme.

Belongs to the cytochrome P450 family. Heme serves as cofactor.

It functions in the pathway mycotoxin biosynthesis. Its function is as follows. Cytochrome P450 monooxygenase; part of the gene cluster that mediates the biosynthesis of a family of the mycotoxins cytochalasins E and K. The hybrid PKS-NRPS synthetase ccsA and the enoyl reductase ccsC are responsible for fusion of phenylalanine with an octaketide backbone and subsequent release of the stable tetramic acid precursor. The polyketide synthase module (PKS) of the PKS-NRPS ccsA is responsible for the synthesis of the octaketide backbone. The downstream nonribosomal peptide synthetase (NRPS) amidates the carboxyl end of the octaketide with a phenylalanine. A reductase-like domain (R) at the C-terminus catalyzes the reductive release of the polyketide-amino acid intermediate. Because ccsA lacks a designated enoylreductase (ER) domain, the required activity is provided the enoyl reductase ccsC. Upon formation of the 11-membered carbocycle-fused perhydroisoindolone intermediate, a number of oxidative steps are required to afford the final cytochalasin E and K, including two hydroxylations at C17 and C18, one alcohol oxidation at C17, one epoxidation at C6 and C7 and two Baeyer-Villiger oxidations. The oxidative modification at C17, C18 and the C6-C7 epoxidation are likely to be catalyzed by the two cytochrome P450 oxygenases ccsD and ccsG. CcsD may be responsible for the epoxidation of the C6-C7 double bond. CcsG may be responsible for the successive oxidative modifications at C17 and C18. The double Baeyer-Villiger oxidations of ketocytochalasin to precytochalasin and cytochalasin Z(16) are among the final steps leading to cytochalasin E and K and are catalyzed by ccsB. The first oxygen insertion step follows that of the classic BVMO mechanism, generating the ester precytochalasin. Release of precytochalasin into an aqueous environment can generate the shunt product iso-precytochalasin through spontaneous isomerization. Alternatively, precytochalasin can undergo further oxidation by ccsB to yield the in-line carbonate-containing cytochalasin Z(16). Cytochalasin Z(16) is a precursor to cytochalasin E and cytochalasin K, whereas iso-precytochalasin is a precursor to cytochalasin Z(17) and rosellichalasin. The hydrolyase ccsE may catalyze hydrolysis of epoxide bond in cytochalasin E to afford cytochalasin K. The function of ccsF has not been assigned but it may play a role in post-PKS-NRPS biosynthetic step, resistance or transport of cytochalasins and related PKS-NRPS products. This is Cytochrome P450 monooxygenase ccsG from Aspergillus clavatus (strain ATCC 1007 / CBS 513.65 / DSM 816 / NCTC 3887 / NRRL 1 / QM 1276 / 107).